We begin with the raw amino-acid sequence, 122 residues long: Single-stranded DNA-binding protein (122 aa).

It belongs to the phi29likevirus single-strand-binding protein family. In terms of assembly, monomer.

Its function is as follows. Single-stranded DNA binding protein required for the elongation during viral DNA replication by strand displacement. Displaced viral DNA strands are transiently coated with the ssDNA-binding protein and therefore protected againt nucleases. The latter is then probably removed by the replisome that performs lagging strand synthesis or during the events that lead up to the recombination process. Has helix-destabilizing activity since it removes secondary structure from the ssDNA in replicative intermediates. The protein is Single-stranded DNA-binding protein (5) of Bacillus subtilis (Bacteriophage B103).